The primary structure comprises 227 residues: uncharacterized protein (227 aa).

17–24 (GKTGCGKT) lines the ATP pocket.

This is an uncharacterized protein from Methanocaldococcus jannaschii (strain ATCC 43067 / DSM 2661 / JAL-1 / JCM 10045 / NBRC 100440) (Methanococcus jannaschii).